Here is a 512-residue protein sequence, read N- to C-terminus: Lysine--tRNA ligase (512 aa).

Mg(2+) is bound by residues E408 and E415.

The protein belongs to the class-II aminoacyl-tRNA synthetase family. In terms of assembly, homodimer. The cofactor is Mg(2+).

It localises to the cytoplasm. It catalyses the reaction tRNA(Lys) + L-lysine + ATP = L-lysyl-tRNA(Lys) + AMP + diphosphate. The sequence is that of Lysine--tRNA ligase from Prochlorococcus marinus (strain MIT 9215).